A 507-amino-acid polypeptide reads, in one-letter code: ATP synthase subunit alpha, chloroplastic (507 aa).

170–177 serves as a coordination point for ATP; the sequence is GDRQTGKT.

Belongs to the ATPase alpha/beta chains family. In terms of assembly, F-type ATPases have 2 components, CF(1) - the catalytic core - and CF(0) - the membrane proton channel. CF(1) has five subunits: alpha(3), beta(3), gamma(1), delta(1), epsilon(1). CF(0) has four main subunits: a, b, b' and c.

Its subcellular location is the plastid. The protein localises to the chloroplast thylakoid membrane. The enzyme catalyses ATP + H2O + 4 H(+)(in) = ADP + phosphate + 5 H(+)(out). Functionally, produces ATP from ADP in the presence of a proton gradient across the membrane. The alpha chain is a regulatory subunit. This Vitis vinifera (Grape) protein is ATP synthase subunit alpha, chloroplastic.